Consider the following 389-residue polypeptide: Na(+)/H(+) antiporter NhaA (389 aa).

A run of 11 helical transmembrane segments spans residues 14–34 (AGGI…NSPL), 59–79 (LILW…GLEV), 95–115 (SLPT…YLLF), 124–144 (AGWA…MALL), 154–174 (VFLL…IALF), 177–197 (TDLS…LVGL), 213–233 (LILW…GVII), 257–277 (PWST…VYVG), 292–312 (IALG…YIAV), 328–348 (IAPV…IASL), and 363–383 (LGTL…LSKV).

Belongs to the NhaA Na(+)/H(+) (TC 2.A.33) antiporter family.

It is found in the cell inner membrane. It catalyses the reaction Na(+)(in) + 2 H(+)(out) = Na(+)(out) + 2 H(+)(in). Na(+)/H(+) antiporter that extrudes sodium in exchange for external protons. The polypeptide is Na(+)/H(+) antiporter NhaA (Shewanella baltica (strain OS223)).